A 482-amino-acid chain; its full sequence is ATP-dependent RNA helicase DBP5 (482 aa).

Residues 1–62 (MSDTKRDPAD…KVEEKKTKQE (62 aa)) are disordered. Over residues 17-62 (IDNEKEDTSEVSTKETVKSQPEKTADSIKPAEKLVPKVEEKKTKQE) the composition is skewed to basic and acidic residues. Ser-86 and Ser-93 each carry phosphoserine. The Q motif motif lies at 92 to 120 (KSFDELGLAPELLKGIYAMKFQKPSKIQE). In terms of domain architecture, Helicase ATP-binding spans 125 to 292 (LLLHNPPRNM…KKIVPNANTL (168 aa)). 138-145 (SQSGTGKT) provides a ligand contact to ATP. Phosphoserine is present on Ser-162. The DEAD box motif lies at 239 to 242 (DEAD). One can recognise a Helicase C-terminal domain in the interval 303-480 (AIKQLYMDCK…EVEKIVKKVL (178 aa)).

The protein belongs to the DEAD box helicase family. DDX19/DBP5 subfamily. Associates with the nuclear pore complex. Interacts with NUP159, GLE1, GFD1 and ZDS1. The interaction with NUP159 is necessary for the association to the nuclear pore complex. Also interacts with the TFIIH complex subunits TFB1, TFB2 and RAD3.

It localises to the cytoplasm. The protein localises to the nucleus. Its subcellular location is the nuclear pore complex. The protein resides in the nucleus membrane. It catalyses the reaction ATP + H2O = ADP + phosphate + H(+). In terms of biological role, ATP-dependent RNA helicase associated with the nuclear pore complex and essential for mRNA export from the nucleus. May participate in a terminal step of mRNA export through the removal of proteins that accompany mRNA through the nucleopore complex. May also be involved in early transcription. This chain is ATP-dependent RNA helicase DBP5 (DBP5), found in Saccharomyces cerevisiae (strain YJM789) (Baker's yeast).